An 853-amino-acid chain; its full sequence is DNA mismatch repair protein MutS (853 aa).

614–621 (GPNMGGKS) provides a ligand contact to ATP.

Belongs to the DNA mismatch repair MutS family.

In terms of biological role, this protein is involved in the repair of mismatches in DNA. It is possible that it carries out the mismatch recognition step. This protein has a weak ATPase activity. In Escherichia fergusonii (strain ATCC 35469 / DSM 13698 / CCUG 18766 / IAM 14443 / JCM 21226 / LMG 7866 / NBRC 102419 / NCTC 12128 / CDC 0568-73), this protein is DNA mismatch repair protein MutS.